The primary structure comprises 466 residues: Xanthine permease XanQ (466 aa).

Over 1 to 44 (MSDINHAGSDLIFELEDRPPFHQALVGAITHLLAIFVPMVTPAL) the chain is Cytoplasmic. The helical transmembrane segment at 45-65 (IVGAALQLSAETTAYLVSMAM) threads the bilayer. The Periplasmic portion of the chain corresponds to 66–74 (IASGIGTWL). A helical membrane pass occupies residues 75-95 (QVNRYGIVGSGLLSIQSVNFS). Residues 96 to 99 (FVTV) lie on the Cytoplasmic side of the membrane. The helical transmembrane segment at 100–120 (MIALGSSMKSDGFHEELIMSS) threads the bilayer. The Periplasmic segment spans residues 121 to 139 (LLGVSFVGAFLVVGSSFIL). The chain crosses the membrane as a helical span at residues 140-160 (PYLRRVITPTVSGIVVLMIGL). Residues 161-170 (SLIKVGIIDF) are Cytoplasmic-facing. Residues 171-191 (GGGFAAKSSGTFGNYEHLGVG) form a helical membrane-spanning segment. The Periplasmic segment spans residues 192-199 (LLVLIVVI). Residues 200 to 220 (GFNCCRSPLLRMGGIAIGLCV) form a helical membrane-spanning segment. The Cytoplasmic segment spans residues 221 to 229 (GYIASLCLG). The helical transmembrane segment at 230–250 (MVDFSSMRNLPLITIPHPFKY) threads the bilayer. Residues 251–277 (GFSFSFHQFLVVGTIYLLSVLEAVGDI) are Periplasmic-facing. A helical transmembrane segment spans residues 278 to 298 (TATAMVSRRPIQGEEYQSRLK). Topologically, residues 299–317 (GGVLADGLVSVIASAVGSL) are cytoplasmic. Residues 318–338 (PLTTFAQNNGVIQMTGVASRY) form a helical membrane-spanning segment. Residues 339 to 361 (VGRTIAVMLVILGLFPMIGGFFT) lie on the Periplasmic side of the membrane. A helical membrane pass occupies residues 362 to 382 (TIPSAVLGGAMTLMFSMIAIA). Position 383 (Gly383) is a topological domain, cytoplasmic. The helical transmembrane segment at 384–403 (IRIIITNGLKRRETLIVATS) threads the bilayer. The Periplasmic portion of the chain corresponds to 404–444 (LGLGLGVSYDPEIFKILPASIYVLVENPICAGGLTAILLNI). A helical transmembrane segment spans residues 445-465 (ILPGGYRQENVLPGITSAEEM). A topological domain (cytoplasmic) is located at residue Asp466.

This sequence belongs to the nucleobase:cation symporter-2 (NCS2) (TC 2.A.40) family.

It is found in the cell inner membrane. The catalysed reaction is xanthine(in) + H(+)(in) = xanthine(out) + H(+)(out). Specific, proton motive force-dependent high-affinity transporter for xanthine. The chain is Xanthine permease XanQ (xanQ) from Escherichia coli O157:H7.